The primary structure comprises 187 residues: UPF0301 protein YqgE (187 aa).

Belongs to the UPF0301 (AlgH) family.

The sequence is that of UPF0301 protein YqgE from Salmonella paratyphi B (strain ATCC BAA-1250 / SPB7).